The chain runs to 305 residues: Oxygen-dependent coproporphyrinogen-III oxidase (305 aa).

Position 99 (S99) interacts with substrate. Positions 103 and 113 each coordinate a divalent metal cation. The active-site Proton donor is the H113. 115 to 117 (NVR) is a substrate binding site. H152 and H182 together coordinate a divalent metal cation. The important for dimerization stretch occupies residues 247 to 282 (YVEFNLVLDRGTLFGLQTGGRTESILMSMPPLARWE). Substrate is bound at residue 265–267 (GGR).

It belongs to the aerobic coproporphyrinogen-III oxidase family. Homodimer. A divalent metal cation is required as a cofactor.

Its subcellular location is the cytoplasm. It catalyses the reaction coproporphyrinogen III + O2 + 2 H(+) = protoporphyrinogen IX + 2 CO2 + 2 H2O. The protein operates within porphyrin-containing compound metabolism; protoporphyrin-IX biosynthesis; protoporphyrinogen-IX from coproporphyrinogen-III (O2 route): step 1/1. In terms of biological role, involved in the heme biosynthesis. Catalyzes the aerobic oxidative decarboxylation of propionate groups of rings A and B of coproporphyrinogen-III to yield the vinyl groups in protoporphyrinogen-IX. In Vibrio cholerae serotype O1 (strain M66-2), this protein is Oxygen-dependent coproporphyrinogen-III oxidase.